A 972-amino-acid chain; its full sequence is DNA cross-link repair 1A protein (972 aa).

The interval 14 to 80 (YKSIRKRKPQ…SEDLDPCKDD (67 aa)) is disordered. Polar residues predominate over residues 23 to 37 (QSNPDSTSVSMQTVT). Basic residues predominate over residues 39 to 54 (GKCRPKRKGSGNRKKS). A compositionally biased stretch (basic and acidic residues) spans 64-80 (SEQRLRPSEDLDPCKDD). A UBZ4-type zinc finger spans residues 105-135 (DGYCPSCQMPFSLLVVQTPRWHVAECLDTPG). Zn(2+)-binding residues include C108, C111, H126, and C130. Disordered regions lie at residues 191–219 (KSSC…NNEC) and 552–623 (GEAC…TTDE). Over residues 210–219 (NLKNVPNNEC) the composition is skewed to polar residues.

The protein belongs to the DNA repair metallo-beta-lactamase (DRMBL) family. Binds PIAS1.

Its subcellular location is the nucleus. The enzyme catalyses a beta-lactam + H2O = a substituted beta-amino acid. Its function is as follows. May be required for DNA interstrand cross-link repair. This is DNA cross-link repair 1A protein (DCLRE1A) from Gallus gallus (Chicken).